The sequence spans 258 residues: Hydroxyacylglutathione hydrolase (258 aa).

Zn(2+)-binding residues include H52, H54, D56, H57, H109, D126, and H164.

This sequence belongs to the metallo-beta-lactamase superfamily. Glyoxalase II family. As to quaternary structure, monomer. Zn(2+) is required as a cofactor.

It catalyses the reaction an S-(2-hydroxyacyl)glutathione + H2O = a 2-hydroxy carboxylate + glutathione + H(+). Its pathway is secondary metabolite metabolism; methylglyoxal degradation; (R)-lactate from methylglyoxal: step 2/2. Functionally, thiolesterase that catalyzes the hydrolysis of S-D-lactoyl-glutathione to form glutathione and D-lactic acid. This Xylella fastidiosa (strain M12) protein is Hydroxyacylglutathione hydrolase.